The chain runs to 611 residues: Dihydroxy-acid dehydratase (611 aa).

Asp82 serves as a coordination point for Mg(2+). Residue Cys123 coordinates [2Fe-2S] cluster. The Mg(2+) site is built by Asp124 and Lys125. The residue at position 125 (Lys125) is an N6-carboxylysine. A [2Fe-2S] cluster-binding site is contributed by Cys192. Glu489 contacts Mg(2+). Catalysis depends on Ser515, which acts as the Proton acceptor. Basic and acidic residues predominate over residues 565–574 (ERRKAEEARG). The tract at residues 565–586 (ERRKAEEARGKKAFTPPTRQRE) is disordered.

Belongs to the IlvD/Edd family. As to quaternary structure, homodimer. The cofactor is [2Fe-2S] cluster. Mg(2+) serves as cofactor.

It carries out the reaction (2R)-2,3-dihydroxy-3-methylbutanoate = 3-methyl-2-oxobutanoate + H2O. It catalyses the reaction (2R,3R)-2,3-dihydroxy-3-methylpentanoate = (S)-3-methyl-2-oxopentanoate + H2O. It functions in the pathway amino-acid biosynthesis; L-isoleucine biosynthesis; L-isoleucine from 2-oxobutanoate: step 3/4. Its pathway is amino-acid biosynthesis; L-valine biosynthesis; L-valine from pyruvate: step 3/4. Functions in the biosynthesis of branched-chain amino acids. Catalyzes the dehydration of (2R,3R)-2,3-dihydroxy-3-methylpentanoate (2,3-dihydroxy-3-methylvalerate) into 2-oxo-3-methylpentanoate (2-oxo-3-methylvalerate) and of (2R)-2,3-dihydroxy-3-methylbutanoate (2,3-dihydroxyisovalerate) into 2-oxo-3-methylbutanoate (2-oxoisovalerate), the penultimate precursor to L-isoleucine and L-valine, respectively. This chain is Dihydroxy-acid dehydratase, found in Parabacteroides distasonis (strain ATCC 8503 / DSM 20701 / CIP 104284 / JCM 5825 / NCTC 11152).